We begin with the raw amino-acid sequence, 187 residues long: Elongation factor P (187 aa).

Belongs to the elongation factor P family.

The protein localises to the cytoplasm. The protein operates within protein biosynthesis; polypeptide chain elongation. In terms of biological role, involved in peptide bond synthesis. Stimulates efficient translation and peptide-bond synthesis on native or reconstituted 70S ribosomes in vitro. Probably functions indirectly by altering the affinity of the ribosome for aminoacyl-tRNA, thus increasing their reactivity as acceptors for peptidyl transferase. This chain is Elongation factor P, found in Parafrankia sp. (strain EAN1pec).